Reading from the N-terminus, the 302-residue chain is Sulfate adenylyltransferase subunit 2 (302 aa).

The interval 280-302 (RQGRLIDSDQSASMEQKKRQGYF) is disordered.

It belongs to the PAPS reductase family. CysD subfamily. As to quaternary structure, heterodimer composed of CysD, the smaller subunit, and CysN.

It catalyses the reaction sulfate + ATP + H(+) = adenosine 5'-phosphosulfate + diphosphate. The protein operates within sulfur metabolism; hydrogen sulfide biosynthesis; sulfite from sulfate: step 1/3. With CysN forms the ATP sulfurylase (ATPS) that catalyzes the adenylation of sulfate producing adenosine 5'-phosphosulfate (APS) and diphosphate, the first enzymatic step in sulfur assimilation pathway. APS synthesis involves the formation of a high-energy phosphoric-sulfuric acid anhydride bond driven by GTP hydrolysis by CysN coupled to ATP hydrolysis by CysD. This Shewanella sp. (strain ANA-3) protein is Sulfate adenylyltransferase subunit 2.